The primary structure comprises 236 residues: 2,3,4,5-tetrahydropyridine-2,6-dicarboxylate N-acetyltransferase (236 aa).

Belongs to the transferase hexapeptide repeat family. DapH subfamily.

The enzyme catalyses (S)-2,3,4,5-tetrahydrodipicolinate + acetyl-CoA + H2O = L-2-acetamido-6-oxoheptanedioate + CoA. It functions in the pathway amino-acid biosynthesis; L-lysine biosynthesis via DAP pathway; LL-2,6-diaminopimelate from (S)-tetrahydrodipicolinate (acetylase route): step 1/3. Catalyzes the transfer of an acetyl group from acetyl-CoA to tetrahydrodipicolinate. This Brevibacillus brevis (strain 47 / JCM 6285 / NBRC 100599) protein is 2,3,4,5-tetrahydropyridine-2,6-dicarboxylate N-acetyltransferase.